A 526-amino-acid polypeptide reads, in one-letter code: Alpha-ketoglutaric semialdehyde dehydrogenase (526 aa).

Residues 159 to 160, 185 to 188, and 240 to 241 contribute to the NADP(+) site; these read SN, KAHS, and GS. The active-site Proton acceptor is glutamate 264. Cysteine 301 (nucleophile) is an active-site residue. Glutamate 393 lines the NADP(+) pocket.

The protein belongs to the aldehyde dehydrogenase family.

The enzyme catalyses 2,5-dioxopentanoate + NADP(+) + H2O = 2-oxoglutarate + NADPH + 2 H(+). The protein operates within carbohydrate acid metabolism; D-glucarate degradation. In terms of biological role, catalyzes the NAD(P)(+)-dependent oxidation of alpha-ketoglutaric semialdehyde (alphaKGSA) to alpha-ketoglutarate in the D-glutarate degradation pathway. The chain is Alpha-ketoglutaric semialdehyde dehydrogenase from Acinetobacter baylyi (strain ATCC 33305 / BD413 / ADP1).